An 86-amino-acid chain; its full sequence is uncharacterized protein (86 aa).

2 TPR repeats span residues 8-41 and 42-75; these read AEYY…NPFY and RDAW…EKHL.

This is an uncharacterized protein from Methanocaldococcus jannaschii (strain ATCC 43067 / DSM 2661 / JAL-1 / JCM 10045 / NBRC 100440) (Methanococcus jannaschii).